Here is a 312-residue protein sequence, read N- to C-terminus: tRNA dimethylallyltransferase (312 aa).

15-22 (GPTAAGKS) contributes to the ATP binding site. A substrate-binding site is contributed by 17–22 (TAAGKS). Positions 40-43 (DSMQ) are interaction with substrate tRNA.

It belongs to the IPP transferase family. Monomer. It depends on Mg(2+) as a cofactor.

It catalyses the reaction adenosine(37) in tRNA + dimethylallyl diphosphate = N(6)-dimethylallyladenosine(37) in tRNA + diphosphate. In terms of biological role, catalyzes the transfer of a dimethylallyl group onto the adenine at position 37 in tRNAs that read codons beginning with uridine, leading to the formation of N6-(dimethylallyl)adenosine (i(6)A). The chain is tRNA dimethylallyltransferase from Streptomyces griseus subsp. griseus (strain JCM 4626 / CBS 651.72 / NBRC 13350 / KCC S-0626 / ISP 5235).